The chain runs to 287 residues: Proline iminopeptidase (287 aa).

Positions 22–271 (PLVLLHGGPG…RSRHMAFIDE (250 aa)) constitute an AB hydrolase-1 domain. The Nucleophile role is filled by Ser98. The active site involves Asp238. His265 acts as the Proton donor in catalysis.

It belongs to the peptidase S33 family.

The protein resides in the cell envelope. It catalyses the reaction Release of N-terminal proline from a peptide.. Its function is as follows. Releases the N-terminal proline from various substrates. The protein is Proline iminopeptidase of Lactiplantibacillus plantarum (strain ATCC BAA-793 / NCIMB 8826 / WCFS1) (Lactobacillus plantarum).